A 142-amino-acid chain; its full sequence is Nucleoside diphosphate kinase (142 aa).

ATP contacts are provided by lysine 9, phenylalanine 57, arginine 85, threonine 91, arginine 102, and asparagine 112. The active-site Pros-phosphohistidine intermediate is the histidine 115.

The protein belongs to the NDK family. In terms of assembly, homotetramer. Mg(2+) serves as cofactor.

It is found in the cytoplasm. The catalysed reaction is a 2'-deoxyribonucleoside 5'-diphosphate + ATP = a 2'-deoxyribonucleoside 5'-triphosphate + ADP. It carries out the reaction a ribonucleoside 5'-diphosphate + ATP = a ribonucleoside 5'-triphosphate + ADP. Its function is as follows. Major role in the synthesis of nucleoside triphosphates other than ATP. The ATP gamma phosphate is transferred to the NDP beta phosphate via a ping-pong mechanism, using a phosphorylated active-site intermediate. This Dehalococcoides mccartyi (strain CBDB1) protein is Nucleoside diphosphate kinase.